The sequence spans 274 residues: MLTSKKEMQSSENKQEENLALLLTNYISYQNIVIFTGGNQFKIRNKKEFTEYTIESNSLFFLAKNTHWDMEIVGIDNSNPYRKIIIDDALIKLLHSISSDDSCYVKKKIFTANLNEMQLNIVSNIITDIKYSGNNKKIFKILYLLSFFNDYNDIVNVILSASSKSIVDRVIKVIELDISKNWKLGDVSSSMFMSDSCLRKQLNKENLTFKKIMLDIKMKHASLFLRTTDKNIDEISCLVGFNSTSYFIKVFKEYYNTTPKKYNGVYSITQGTLP.

Residues 168-265 (DRVIKVIELD…NTTPKKYNGV (98 aa)) enclose the HTH araC/xylS-type domain. 2 DNA-binding regions (H-T-H motif) span residues 185–206 (GDVSSSMFMSDSCLRKQLNKEN) and 232–255 (IDEISCLVGFNSTSYFIKVFKEYY).

In terms of biological role, could help in the transcriptional activator of eaeA expression in enteropathogenic E.coli. However, it seems that it is PerC which acts as an activator. The sequence is that of Transcriptional activator PerA (perA) from Escherichia coli O127:H6 (strain E2348/69 / EPEC).